The following is a 62-amino-acid chain: Large ribosomal subunit protein bL28 (62 aa).

The interval 1 to 22 is disordered; it reads MGKQCFVTGRKASTGNRRSHAL.

The protein belongs to the bacterial ribosomal protein bL28 family.

The protein is Large ribosomal subunit protein bL28 of Staphylococcus aureus (strain N315).